The chain runs to 127 residues: Oleate-induced peroxisomal protein POX18 (127 aa).

Positions 14 to 119 (FKELHEGLAD…KATAIESVFK (106 aa)) constitute an SCP2 domain. The segment at 33–41 (AVNAVIVIT) is hydrophobic. A hydrophilic region spans residues 43–52 (KNKEGKEQSW).

As to quaternary structure, monomer.

It localises to the peroxisome. Its pathway is lipid metabolism; fatty acid metabolism. In terms of biological role, is involved in beta-oxidation of long-chain fatty acids. Its exact function is unknown, but possesses a nonspecific lipid-transfer activity, despite the absence of a cysteine residue thought to be essential for the activity of its mammalian counterparts. The protein is Oleate-induced peroxisomal protein POX18 (POX18) of Candida maltosa (Yeast).